A 692-amino-acid chain; its full sequence is Epithelial sodium channel subunit alpha (692 aa).

The interval 1–67 (MSSIKGNKLE…PAAPQQPTAE (67 aa)) is disordered. The Cytoplasmic portion of the chain corresponds to 1-108 (MSSIKGNKLE…CSQHNRMKTA (108 aa)). Residues 56–65 (PEPAAPQQPT) show a composition bias toward low complexity. A helical transmembrane segment spans residues 109-129 (FWAVLWLCTFGMMYWQFGLLF). Over 130–585 (GEYFSYPVSL…SQWSLWFGSS (456 aa)) the chain is Extracellular. Cystine bridges form between cysteine 156–cysteine 328, cysteine 252–cysteine 259, cysteine 305–cysteine 312, cysteine 417–cysteine 502, cysteine 439–cysteine 479, cysteine 439–cysteine 498, cysteine 443–cysteine 494, cysteine 452–cysteine 479, cysteine 452–cysteine 502, and cysteine 454–cysteine 468. Residues 198-266 (RSRRDLRGTL…SDCFYQTYSS (69 aa)) form a gating release of inhibition by proteolysis (GRIP); protease-sensitive region that is responsible for the proteolytic activation of the channel region. A helical membrane pass occupies residues 586–606 (VLSVVEMAELIFDLLVITFLM). The Cytoplasmic portion of the chain corresponds to 607 to 692 (LLRRFRSRYW…GSSACPLGGP (86 aa)). The segment at 627–692 (EVASTLASSP…GSSACPLGGP (66 aa)) is disordered. The span at 628–637 (VASTLASSPP) shows a compositional bias: polar residues. Over residues 653–666 (GPAPSPALTAPPPA) the composition is skewed to pro residues. The PY motif; recruits WW domain-containing proteins and is thereby required for ubiquitination and inhibition of the channel by NEDD4 and NEDD4L signature appears at 663 to 667 (PPPAY). Low complexity predominate over residues 682–692 (AGSSACPLGGP).

Belongs to the amiloride-sensitive sodium channel (TC 1.A.6) family. SCNN1A subfamily. In terms of assembly, heterotrimer; containing an alpha/SCNN1A, a beta/SCNN1B and a gamma/SCNN1G subunit. Interacts with WWP1 (via WW domains). Interacts with WWP2 (via WW domains); inhibits the channel. Interacts with BPIFA1; the interaction is indirect via SCNN1B and inhibits the proteolytic processing of SCNN1A and SCNN1G and the activation of ENaC. Interacts with the full-length immature form of PCSK9 (pro-PCSK9). Ubiquitinated. Can be ubiquitinated at multiple sites and undergo monoubiquitination and polyubiquitination. Ubiquitination by NEDD4 or NEDD4L inhibits the ENaC channel through endocytosis, intracellular retention and degradation of its individual subunits. Post-translationally, N-glycosylated. In terms of processing, ENaC is activated through the proteolytic maturation of its subunits. Furin cleaves the SCNN1A subunit, which results in a stepwise increase in the open probability of the channel due to the release of an inhibitory tract. BPIFA1, which is recruited by the SCNN1B subunit, prevents the proteolytic activation of ENaC.

It is found in the apical cell membrane. Its subcellular location is the cell projection. The protein localises to the cilium. The protein resides in the cytoplasmic granule. It localises to the cytoplasm. It is found in the cytoplasmic vesicle. Its subcellular location is the secretory vesicle. The protein localises to the acrosome. The protein resides in the flagellum. The catalysed reaction is Na(+)(in) = Na(+)(out). Originally identified and characterized by its inhibition by the diuretic drug amiloride. Functionally, this is one of the three pore-forming subunits of the heterotrimeric epithelial sodium channel (ENaC), a critical regulator of sodium balance and fluid homeostasis. ENaC operates in epithelial tissues, where it mediates the electrodiffusion of sodium ions from extracellular fluid through the apical membrane of cells, with water following osmotically. It plays a key role in maintaining sodium homeostasis through electrogenic sodium reabsorption in the kidneys. Additionally, ENaC is essential for airway surface liquid homeostasis, which is crucial for proper mucus clearance. The sequence is that of Epithelial sodium channel subunit alpha from Pan troglodytes (Chimpanzee).